We begin with the raw amino-acid sequence, 62 residues long: Sperm protamine P1 (62 aa).

Positions 1–62 are disordered; sequence MARYRHSRSR…RYSRRRRRRY (62 aa).

It belongs to the protamine P1 family. In terms of tissue distribution, testis.

It localises to the nucleus. The protein resides in the chromosome. Protamines substitute for histones in the chromatin of sperm during the haploid phase of spermatogenesis. They compact sperm DNA into a highly condensed, stable and inactive complex. The protein is Sperm protamine P1 (PRM1) of Bettongia penicillata (Brush-tailed bettong).